A 124-amino-acid chain; its full sequence is Large ribosomal subunit protein bL12 (124 aa).

The protein belongs to the bacterial ribosomal protein bL12 family. As to quaternary structure, homodimer. Part of the ribosomal stalk of the 50S ribosomal subunit. Forms a multimeric L10(L12)X complex, where L10 forms an elongated spine to which 2 to 4 L12 dimers bind in a sequential fashion. Binds GTP-bound translation factors.

In terms of biological role, forms part of the ribosomal stalk which helps the ribosome interact with GTP-bound translation factors. Is thus essential for accurate translation. In Brucella abortus (strain S19), this protein is Large ribosomal subunit protein bL12.